The sequence spans 491 residues: MERPALLQNGEHGAVGSLETKTTTRLMPKPFSIESLIATQTPATVSASASIAASPPSPPEDHEQEQEQELSARAMVASSALGLTQFPLYNPWLHGYFAQNHERLTHLIAGGGCYLGSPVGNPFAGKEPSHPHPPPPHALDKSPLPHPLDTRFLPFNASAAAAAASAATPTDLSYRRLAELMNQDYVHNLSVNARLQHMAVAGRLQEDHPSHSLMHLQEPMLLQANPFSPAKSVSHSPVEPTLDVGVDEDYECSGDSSSDISLTLSPMPRNCNRELDKSRNGAYTNSDSEDCSDDEGAHSHHDASGLGGKDSQGNGSGSSSSKSRRRRTAFTSEQLLELEREFHAKKYLSLTERSQIATSLKLSEVQVKIWFQNRRAKWKRVKAGLTSHGLGRNGSASGTKIVVPIPVHVNRFAVRSQHQQLEKMCLSGPKPDLRKKLSTEAMSGFEKFNGGGLGGSAPSSSTASVGAGSVGMGLALGIGVTTPLSLGRSIY.

Disordered regions lie at residues 1–23 (MERPALLQNGEHGAVGSLETKTT), 46–69 (SASASIAASPPSPPEDHEQEQEQE), 124–146 (AGKEPSHPHPPPPHALDKSPLPH), and 227–329 (FSPA…RRTA). Positions 254 to 264 (GDSSSDISLTL) are enriched in polar residues. The span at 305-316 (GLGGKDSQGNGS) shows a compositional bias: gly residues. Residues 323 to 382 (SRRRRTAFTSEQLLELEREFHAKKYLSLTERSQIATSLKLSEVQVKIWFQNRRAKWKRVK) constitute a DNA-binding region (homeobox).

It localises to the nucleus. Plays a regulatory role in neural branching of the tracheae: segment-specific aspects of these neural branching patterns appear to be generated by homeotic regulation of expression. The protein is Homeobox protein unplugged of Drosophila pseudoobscura pseudoobscura (Fruit fly).